A 127-amino-acid polypeptide reads, in one-letter code: Dual endothelin-1/VEGF signal peptide receptor (127 aa).

Topologically, residues 1–65 (MNALYVTTVP…EMKSRWNWGS (65 aa)) are extracellular. Residues 66–84 (ITCIICFTCVGSQLSMSSS) traverse the membrane as a helical segment. At 85-127 (KASNFSGPLQLYQRGIGHITNSYKRPQAPAWPCLSSGTMGRSH) the chain is on the cytoplasmic side.

In terms of tissue distribution, widely expressed with higher levels in kidney and aorta.

Its subcellular location is the cell membrane. Its function is as follows. Dual receptor for both endothelin-1 and the signal sequence of vascular endothelial growth factor A. Does not act as a receptor for angiotensin-2. Does not bind the VEGFA mature protein. May play a role in angiogenesis with a significant role in cardiovascular and neural development. This chain is Dual endothelin-1/VEGF signal peptide receptor, found in Mus musculus (Mouse).